The primary structure comprises 238 residues: ATP-dependent dethiobiotin synthetase BioD (238 aa).

12–17 is an ATP binding site; that stretch reads EVGKTV. Residue T16 coordinates Mg(2+). K37 is a catalytic residue. A substrate-binding site is contributed by T41. ATP contacts are provided by residues D50, 109-112, 170-171, and 200-202; these read EGAG, GS, and PAG. 2 residues coordinate Mg(2+): D50 and E109.

Belongs to the dethiobiotin synthetase family. Homodimer. The cofactor is Mg(2+).

It localises to the cytoplasm. It carries out the reaction (7R,8S)-7,8-diammoniononanoate + CO2 + ATP = (4R,5S)-dethiobiotin + ADP + phosphate + 3 H(+). The protein operates within cofactor biosynthesis; biotin biosynthesis; biotin from 7,8-diaminononanoate: step 1/2. In terms of biological role, catalyzes a mechanistically unusual reaction, the ATP-dependent insertion of CO2 between the N7 and N8 nitrogen atoms of 7,8-diaminopelargonic acid (DAPA, also called 7,8-diammoniononanoate) to form a ureido ring. This chain is ATP-dependent dethiobiotin synthetase BioD, found in Streptomyces coelicolor (strain ATCC BAA-471 / A3(2) / M145).